The primary structure comprises 293 residues: Ribonuclease HIII (293 aa).

The RNase H type-2 domain occupies 78–293; sequence LPLIGTDEVG…TEKAKKRLER (216 aa). Positions 84, 85, and 187 each coordinate a divalent metal cation.

This sequence belongs to the RNase HII family. RnhC subfamily. Requires Mn(2+) as cofactor. The cofactor is Mg(2+).

The protein localises to the cytoplasm. It carries out the reaction Endonucleolytic cleavage to 5'-phosphomonoester.. Functionally, endonuclease that specifically degrades the RNA of RNA-DNA hybrids. The polypeptide is Ribonuclease HIII (Streptococcus pneumoniae (strain JJA)).